The chain runs to 130 residues: Small ribosomal subunit protein uS9 (130 aa).

Belongs to the universal ribosomal protein uS9 family.

The sequence is that of Small ribosomal subunit protein uS9 from Polaromonas naphthalenivorans (strain CJ2).